We begin with the raw amino-acid sequence, 704 residues long: SH3KBP1-binding protein 1 (704 aa).

A2 carries the post-translational modification N-acetylalanine. The 70-residue stretch at 19-88 (EVIHLNVGGK…LRTKELDPRG (70 aa)) folds into the BTB domain. The segment at 146–165 (VGPQQIGGRPAPVRRSNTMP) is disordered. T163 is modified (phosphothreonine). WD repeat units follow at residues 233-280 (RLDW…GGSE), 283-322 (VFHL…WQVQ), 324-359 (VQPI…LRMK), 428-466 (VHRS…GMIS), and 548-586 (LECE…DGLG). The disordered stretch occupies residues 609–704 (PLASSRGSFP…LKKTLNETSF (96 aa)). Low complexity predominate over residues 612–631 (SSRGSFPSPSPRTSLTSLHS). Positions 618–623 (PSPSPR) match the PXXXPR motif. Phosphoserine is present on residues S644 and S646. The PXXXPR signature appears at 678 to 683 (PTPAPR). T693 is subject to Phosphothreonine.

This sequence belongs to the KCTD3 family. Monomer. Interacts with CUL3; interaction is direct and forms a 5:5 heterodecamer. Interacts (via PXXXPR motifs) with SH3KBP1 (via SH3 domains). Directly interacts with cathepsin B/CTSB.

The protein resides in the lysosome. Its function is as follows. Inhibits CBL-SH3KBP1 complex mediated down-regulation of EGFR signaling by sequestration of SH3KBP1. Binds to SH3KBP1 and prevents its interaction with CBL and inhibits translocation of SH3KBP1 to EGFR containing vesicles upon EGF stimulation. This is SH3KBP1-binding protein 1 (Shkbp1) from Mus musculus (Mouse).